Consider the following 1056-residue polypeptide: Isoleucine--tRNA ligase (1056 aa).

The short motif at 56–66 (PFATGLPHYGH) is the 'HIGH' region element. Positions 603–607 (KMSKS) match the 'KMSKS' region motif. Lys-606 contributes to the ATP binding site.

This sequence belongs to the class-I aminoacyl-tRNA synthetase family. IleS type 2 subfamily. As to quaternary structure, monomer. Requires Zn(2+) as cofactor.

It localises to the cytoplasm. The catalysed reaction is tRNA(Ile) + L-isoleucine + ATP = L-isoleucyl-tRNA(Ile) + AMP + diphosphate. Its function is as follows. Catalyzes the attachment of isoleucine to tRNA(Ile). As IleRS can inadvertently accommodate and process structurally similar amino acids such as valine, to avoid such errors it has two additional distinct tRNA(Ile)-dependent editing activities. One activity is designated as 'pretransfer' editing and involves the hydrolysis of activated Val-AMP. The other activity is designated 'posttransfer' editing and involves deacylation of mischarged Val-tRNA(Ile). This is Isoleucine--tRNA ligase from Bdellovibrio bacteriovorus (strain ATCC 15356 / DSM 50701 / NCIMB 9529 / HD100).